Consider the following 484-residue polypeptide: Glutamyl-tRNA(Gln) amidotransferase subunit A (484 aa).

Residues K77 and S152 each act as charge relay system in the active site. The Acyl-ester intermediate role is filled by S176.

This sequence belongs to the amidase family. GatA subfamily. Heterotrimer of A, B and C subunits.

The catalysed reaction is L-glutamyl-tRNA(Gln) + L-glutamine + ATP + H2O = L-glutaminyl-tRNA(Gln) + L-glutamate + ADP + phosphate + H(+). Allows the formation of correctly charged Gln-tRNA(Gln) through the transamidation of misacylated Glu-tRNA(Gln) in organisms which lack glutaminyl-tRNA synthetase. The reaction takes place in the presence of glutamine and ATP through an activated gamma-phospho-Glu-tRNA(Gln). In Lacticaseibacillus paracasei (strain ATCC 334 / BCRC 17002 / CCUG 31169 / CIP 107868 / KCTC 3260 / NRRL B-441) (Lactobacillus paracasei), this protein is Glutamyl-tRNA(Gln) amidotransferase subunit A.